Consider the following 215-residue polypeptide: Elongation factor Ts (215 aa).

The segment at 80 to 83 is involved in Mg(2+) ion dislocation from EF-Tu; sequence TDFV.

The protein belongs to the EF-Ts family.

It is found in the cytoplasm. In terms of biological role, associates with the EF-Tu.GDP complex and induces the exchange of GDP to GTP. It remains bound to the aminoacyl-tRNA.EF-Tu.GTP complex up to the GTP hydrolysis stage on the ribosome. This is Elongation factor Ts from Heliobacterium modesticaldum (strain ATCC 51547 / Ice1).